A 164-amino-acid polypeptide reads, in one-letter code: HTH-type transcriptional regulator IscR (164 aa).

Positions 2–131 (RLTSKGRYAV…NNITLAELVN (130 aa)) constitute an HTH rrf2-type domain. Residues 28–51 (LADISERQGISLSYLEQLFSRLRK) constitute a DNA-binding region (H-T-H motif). The [2Fe-2S] cluster site is built by cysteine 92, cysteine 98, and cysteine 104. The disordered stretch occupies residues 143–164 (NNDTRRTANGRPQETINVNLRA). Over residues 152 to 164 (GRPQETINVNLRA) the composition is skewed to polar residues.

It depends on [2Fe-2S] cluster as a cofactor.

Its function is as follows. Regulates the transcription of several operons and genes involved in the biogenesis of Fe-S clusters and Fe-S-containing proteins. This is HTH-type transcriptional regulator IscR from Yersinia pseudotuberculosis serotype O:1b (strain IP 31758).